We begin with the raw amino-acid sequence, 292 residues long: Ventral anterior homeobox 2 (292 aa).

Residues methionine 1–alanine 36 are compositionally biased toward basic and acidic residues. The tract at residues methionine 1–aspartate 74 is disordered. The segment covering threonine 38–alanine 55 has biased composition (polar residues). A DNA-binding region (homeobox) is located at residues proline 102 to glutamine 161. Positions alanine 212–leucine 241 are disordered.

The protein belongs to the EMX homeobox family.

Its subcellular location is the nucleus. In terms of biological role, transcription factor that may function in dorsoventral specification of the forebrain. Regulates the expression of Wnt signaling antagonists including the expression of a truncated TCF7L2 isoform that cannot bind CTNNB1 and acts therefore as a potent dominant-negative Wnt antagonist. Plays a crucial role in eye development and, in particular, in the specification of the ventral optic vesicle. May be a regulator of axial polarization in the retina. The polypeptide is Ventral anterior homeobox 2 (Vax2) (Rattus norvegicus (Rat)).